Reading from the N-terminus, the 523-residue chain is Probable DNA ligase (523 aa).

Position 210 (glutamate 210) interacts with ATP. Lysine 212 acts as the N6-AMP-lysine intermediate in catalysis. Residues arginine 217, arginine 232, glutamate 261, phenylalanine 317, arginine 388, and lysine 394 each contribute to the ATP site.

It belongs to the ATP-dependent DNA ligase family. It depends on Mg(2+) as a cofactor.

The enzyme catalyses ATP + (deoxyribonucleotide)n-3'-hydroxyl + 5'-phospho-(deoxyribonucleotide)m = (deoxyribonucleotide)n+m + AMP + diphosphate.. DNA ligase that seals nicks in double-stranded DNA during DNA replication, DNA recombination and DNA repair. In Nocardia farcinica (strain IFM 10152), this protein is Probable DNA ligase.